Reading from the N-terminus, the 257-residue chain is Protein THYLAKOID ASSEMBLY 8-like, chloroplastic (257 aa).

Residues 1-55 (MTAIRVCSRKFPTFASIFFQNITRNPSIHRISFSNLKPKTLLHPIPPKPFTVFVS) constitute a chloroplast transit peptide. PPR repeat units lie at residues 142 to 176 (DVFM…NLFP) and 177 to 211 (DSQT…PDPP).

The protein belongs to the PPR family. P subfamily.

The protein localises to the plastid. Its subcellular location is the chloroplast. Binds weakly to specific single strand RNA (ssRNA). The chain is Protein THYLAKOID ASSEMBLY 8-like, chloroplastic from Arabidopsis thaliana (Mouse-ear cress).